Here is a 130-residue protein sequence, read N- to C-terminus: Small ribosomal subunit protein uS8 (130 aa).

This sequence belongs to the universal ribosomal protein uS8 family. As to quaternary structure, part of the 30S ribosomal subunit.

One of the primary rRNA binding proteins, it binds directly to 16S rRNA central domain where it helps coordinate assembly of the platform of the 30S subunit. This is Small ribosomal subunit protein uS8 from Methanoregula boonei (strain DSM 21154 / JCM 14090 / 6A8).